The primary structure comprises 313 residues: Ribosomal RNA small subunit methyltransferase H (313 aa).

S-adenosyl-L-methionine is bound by residues 35 to 37 (GGH), Asp-55, Phe-81, Asp-103, and Gln-110.

It belongs to the methyltransferase superfamily. RsmH family.

It localises to the cytoplasm. The enzyme catalyses cytidine(1402) in 16S rRNA + S-adenosyl-L-methionine = N(4)-methylcytidine(1402) in 16S rRNA + S-adenosyl-L-homocysteine + H(+). Specifically methylates the N4 position of cytidine in position 1402 (C1402) of 16S rRNA. The protein is Ribosomal RNA small subunit methyltransferase H of Pseudomonas aeruginosa (strain LESB58).